A 163-amino-acid polypeptide reads, in one-letter code: Cytochrome b6-f complex subunit 4 (163 aa).

3 helical membrane-spanning segments follow: residues 36–56 (LLYI…GLAV), 95–115 (LLGV…PFLE), and 131–151 (TVFL…TLPI).

This sequence belongs to the cytochrome b family. PetD subfamily. In terms of assembly, the 4 large subunits of the cytochrome b6-f complex are cytochrome b6, subunit IV (17 kDa polypeptide, petD), cytochrome f and the Rieske protein, while the 4 small subunits are petG, petL, petM and petN. The complex functions as a dimer.

It is found in the plastid. Its subcellular location is the chloroplast thylakoid membrane. Its function is as follows. Component of the cytochrome b6-f complex, which mediates electron transfer between photosystem II (PSII) and photosystem I (PSI), cyclic electron flow around PSI, and state transitions. The polypeptide is Cytochrome b6-f complex subunit 4 (Pelargonium hortorum (Common geranium)).